The chain runs to 302 residues: Protease HtpX homolog (302 aa).

A helical transmembrane segment spans residues 27–47; the sequence is LLMAIGGIIGGTAGMLIALII. H141 contacts Zn(2+). E142 is a catalytic residue. Position 145 (H145) interacts with Zn(2+). 2 helical membrane-spanning segments follow: residues 151–171 and 195–215; these read VLVA…ANMA and IGAI…QLAI. E220 serves as a coordination point for Zn(2+).

It belongs to the peptidase M48B family. The cofactor is Zn(2+).

It is found in the cell inner membrane. The polypeptide is Protease HtpX homolog (Aquifex aeolicus (strain VF5)).